Here is a 309-residue protein sequence, read N- to C-terminus: Porphobilinogen deaminase (309 aa).

Cysteine 244 carries the post-translational modification S-(dipyrrolylmethanemethyl)cysteine.

Belongs to the HMBS family. In terms of assembly, monomer. Requires dipyrromethane as cofactor.

The enzyme catalyses 4 porphobilinogen + H2O = hydroxymethylbilane + 4 NH4(+). It participates in porphyrin-containing compound metabolism; protoporphyrin-IX biosynthesis; coproporphyrinogen-III from 5-aminolevulinate: step 2/4. Its function is as follows. Tetrapolymerization of the monopyrrole PBG into the hydroxymethylbilane pre-uroporphyrinogen in several discrete steps. The chain is Porphobilinogen deaminase from Listeria innocua serovar 6a (strain ATCC BAA-680 / CLIP 11262).